The primary structure comprises 405 residues: Proline-rich P65 protein (405 aa).

The disordered stretch occupies residues 1–58; sequence MDINKPGWNQSDQQATAYDPNQQQYYGDGSTYYDPDQAVDPNQAYYPDPNTYPDAAAY. Over residues 7 to 25 the composition is skewed to polar residues; that stretch reads GWNQSDQQATAYDPNQQQY. A run of 12 repeats spans residues 40–45, 75–80, 83–87, 89–93, 95–99, 101–105, 107–111, 119–123, 140–145, 148–152, 154–158, and 168–172. Residues 40–172 are 12 X 5 AA repeats of D-P-N-Q-A-Y; that stretch reads DPNQAYYPDP…YVTSTDPNAY (133 aa).

In terms of processing, the N-terminus is blocked.

It localises to the cell membrane. The protein is Proline-rich P65 protein (p65) of Mycoplasma pneumoniae (strain ATCC 29342 / M129 / Subtype 1) (Mycoplasmoides pneumoniae).